The chain runs to 285 residues: Methanethiol S-methyltransferase 1 (285 aa).

Helical transmembrane passes span 55 to 75 (AYLVFFVTILYAIGFVMGLVV), 88 to 108 (AEAVIINLLLMALFAVQHSVM), 132 to 152 (LFASLSLLLLFWQWRPLPTVI), 162 to 182 (VTLVTVSFAGWVLVFTSTFII), and 224 to 244 (FIVAFWAAPVMTAGHLLFAAV).

Belongs to the nurim family.

The protein localises to the membrane. It carries out the reaction methanethiol + S-adenosyl-L-methionine = dimethyl sulfide + S-adenosyl-L-homocysteine + H(+). Catalyzes the methylation of methanethiol (MeSH) to yield dimethylsulphide (DMS). This is Methanethiol S-methyltransferase 1 from Bradyrhizobium diazoefficiens (strain JCM 10833 / BCRC 13528 / IAM 13628 / NBRC 14792 / USDA 110).